A 156-amino-acid chain; its full sequence is Transcription elongation factor GreA (156 aa).

A coiled-coil region spans residues 46 to 67 (AEYHAAREKQSFIEGRIKELEA).

It belongs to the GreA/GreB family.

Its function is as follows. Necessary for efficient RNA polymerase transcription elongation past template-encoded arresting sites. The arresting sites in DNA have the property of trapping a certain fraction of elongating RNA polymerases that pass through, resulting in locked ternary complexes. Cleavage of the nascent transcript by cleavage factors such as GreA or GreB allows the resumption of elongation from the new 3'terminus. GreA releases sequences of 2 to 3 nucleotides. The polypeptide is Transcription elongation factor GreA (Cereibacter sphaeroides (strain ATCC 17029 / ATH 2.4.9) (Rhodobacter sphaeroides)).